The sequence spans 139 residues: MINFNYETEFSLDNEQAFTDWLSAVIVSEEKNEGEINYIFCDDEYLHKINVEYLNHDTLTDIISFDYTVGNEISGDIFVSVERVEDNAKDFNVSFEEELKRVLAHGILHYCGYKDKSDADAELMRSKEDEKIAMFHVEQ.

3 residues coordinate Zn(2+): His-105, His-109, and Asp-115.

Belongs to the endoribonuclease YbeY family. The cofactor is Zn(2+).

It is found in the cytoplasm. Its function is as follows. Single strand-specific metallo-endoribonuclease involved in late-stage 70S ribosome quality control and in maturation of the 3' terminus of the 16S rRNA. The sequence is that of Endoribonuclease YbeY from Flavobacterium johnsoniae (strain ATCC 17061 / DSM 2064 / JCM 8514 / BCRC 14874 / CCUG 350202 / NBRC 14942 / NCIMB 11054 / UW101) (Cytophaga johnsonae).